The sequence spans 363 residues: Suberization-associated anionic peroxidase (363 aa).

The N-terminal stretch at 1 to 20 is a signal peptide; that stretch reads MGFRLSHLSLALSFVALALA. Asn-36 is a glycosylation site (N-linked (GlcNAc...) asparagine). 2 cysteine pairs are disulfide-bonded: Cys-80–Cys-159 and Cys-111–Cys-116. The active-site Proton acceptor is the His-109. Asp-110, Val-113, Gly-115, and Asp-117 together coordinate Ca(2+). N-linked (GlcNAc...) asparagine glycans are attached at residues Asn-126, Asn-161, and Asn-199. Cystine bridges form between Cys-166-Cys-352 and Cys-245-Cys-264. Pro-208 serves as a coordination point for substrate. N-linked (GlcNAc...) asparagine glycosylation is found at Asn-213 and Asn-225. His-238 lines the heme b pocket. A Ca(2+)-binding site is contributed by Thr-239. A glycan (N-linked (GlcNAc...) asparagine) is linked at Asn-263. Ca(2+) contacts are provided by Asp-277, Thr-279, and Asp-284.

Belongs to the peroxidase family. Classical plant (class III) peroxidase subfamily. It depends on Ca(2+) as a cofactor. The cofactor is heme b.

Its subcellular location is the secreted. It carries out the reaction 2 a phenolic donor + H2O2 = 2 a phenolic radical donor + 2 H2O. Functionally, removal of H(2)O(2), oxidation of toxic reductants, biosynthesis and degradation of lignin, suberization, auxin catabolism, response to environmental stresses such as wounding, pathogen attack and oxidative stress. These functions might be dependent on each isozyme/isoform in each plant tissue. In terms of biological role, suggested to catalyze the deposition of the aromatic residues of suberin on the cell wall and thus play a role in cell-suberization. The chain is Suberization-associated anionic peroxidase from Solanum tuberosum (Potato).